The primary structure comprises 283 residues: Non-selective voltage-gated ion channel VDAC1 (283 aa).

Ala-2 carries the N-acetylalanine modification. Lys-12 serves as a coordination point for ATP. A Glycyl lysine isopeptide (Lys-Gly) (interchain with G-Cter in ubiquitin) cross-link involves residue Lys-12. Ser-13 is subject to Phosphoserine. Residue Thr-19 is modified to Phosphothreonine. Lys-20 lines the ATP pocket. Lys-20 is modified (N6-acetyllysine; alternate). N6-succinyllysine; alternate is present on Lys-20. A Glycyl lysine isopeptide (Lys-Gly) (interchain with G-Cter in ubiquitin); alternate cross-link involves residue Lys-20. Transmembrane regions (beta stranded) follow at residues 26–35 (LIKLDLKTKS) and 39–47 (LEFTSSGSA). Residues Lys-53 and Lys-61 each participate in a glycyl lysine isopeptide (Lys-Gly) (interchain with G-Cter in ubiquitin) cross-link. A beta stranded transmembrane segment spans residues 54 to 64 (VNGSLETKYRW). Tyr-67 carries the post-translational modification Phosphotyrosine. A run of 3 beta stranded transmembrane segments spans residues 69-76 (LTFTEKWN), 80-89 (TLGTEITVED), and 95-104 (LKLTFDSSFS). The residue at position 107 (Thr-107) is a Phosphothreonine. Lys-109 bears the N6-acetyllysine; alternate mark. A Glycyl lysine isopeptide (Lys-Gly) (interchain with G-Cter in ubiquitin); alternate cross-link involves residue Lys-109. A Glycyl lysine isopeptide (Lys-Gly) (interchain with G-Cter in ubiquitin) cross-link involves residue Lys-110. 4 consecutive transmembrane segments (beta stranded) span residues 111-120 (NAKIKTGYKR), 123-130 (INLGCDVD), 137-145 (SIRGALVLG), and 150-158 (LAGYQMNFE). At Ser-137 the chain carries Phosphoserine. Lys-161 participates in a covalent cross-link: Glycyl lysine isopeptide (Lys-Gly) (interchain with G-Cter in ubiquitin). 6 beta stranded membrane-spanning segments follow: residues 163 to 175 (RVTQSNFAVGYKT), 178 to 185 (FQLHTNVN), 189 to 198 (EFGGSIYQKV), 202 to 211 (LETAVNLAWT), 218 to 227 (RFGIAAKYQV), and 231 to 238 (ACFSAKVN). Ser-193 carries the phosphoserine; by NEK1 modification. Ser-240 is modified (phosphoserine). Residue 242-244 (LIG) coordinates NAD(+). Residues 242-251 (LIGLGYTQTL) form a beta stranded membrane-spanning segment. Lys-252 is subject to N6-acetyllysine. The chain crosses the membrane as a beta stranded span at residues 254–263 (GIKLTLSALL). 260 to 264 (SALLD) serves as a coordination point for NAD(+). Position 266 is an N6-acetyllysine; alternate (Lys-266). Residue Lys-266 forms a Glycyl lysine isopeptide (Lys-Gly) (interchain with G-Cter in ubiquitin); alternate linkage. Residues 273–282 (HKLGLGLEFQ) form a beta stranded membrane-spanning segment. Lys-274 is covalently cross-linked (Glycyl lysine isopeptide (Lys-Gly) (interchain with G-Cter in ubiquitin)).

It belongs to the eukaryotic mitochondrial porin family. Homodimer and homotrimer; in response to cyclic AMP or calcium; oligomerization is required for scramblase activity. Component of the mitochondrial permeability transition pore complex (mPTPC), at least composed of SPG7, VDAC1 and PPIF. Interacts with SPG7, NIPSNAP2 and SLC25A30. Interacts with hexokinases including HK1. The HK1-VDAC1 complex interacts with ATF2. Interacts with BCL2L1. Interacts with BAK1. Interacts with RTL10/BOP (via BH3 domain). Interacts with amyloid-beta and APP; induces VDAC1 dephosphorylation. Interacts with TMEM41B. Interacts with BCAP31. Interacts with HSPA9; this interaction couples ITPR1 to VDAC1. Phosphorylation at Ser-193 by NEK1 promotes the closed conformational state preventing excessive mitochondrial membrane permeability and subsequent apoptotic cell death after injury. Phosphorylation by the AKT-GSK3B axis stabilizes the protein probably by preventing ubiquitin-mediated proteasomal degradation. In terms of processing, ubiquitinated. Undergoes monoubiquitination and polyubiquitination by PRKN; monoubiquitination at Lys-274 inhibits apoptosis, whereas polyubiquitination leads to its degradation and promotes mitophagy. Deubiquitinated by USP30. Widely expressed. High levels in heart and kidney with lower levels in brain and ascitic tumor. Very low levels in liver.

The protein localises to the mitochondrion outer membrane. Its subcellular location is the cell membrane. It localises to the membrane raft. The catalysed reaction is Ca(2+)(in) = Ca(2+)(out). The enzyme catalyses Na(+)(in) = Na(+)(out). It catalyses the reaction chloride(in) = chloride(out). It carries out the reaction Mg(2+)(in) = Mg(2+)(out). The catalysed reaction is K(+)(in) = K(+)(out). The enzyme catalyses ATP(in) = ATP(out). It catalyses the reaction L-glutamate(out) = L-glutamate(in). It carries out the reaction dopamine(out) = dopamine(in). The catalysed reaction is acetylcholine(in) = acetylcholine(out). The enzyme catalyses Fe(III)-[cytochrome c](out) = Fe(III)-[cytochrome c](in). It catalyses the reaction a 1,2-diacyl-sn-glycero-3-phosphocholine(in) = a 1,2-diacyl-sn-glycero-3-phosphocholine(out). It carries out the reaction a 1,2-diacyl-sn-glycero-3-phospho-L-serine(in) = a 1,2-diacyl-sn-glycero-3-phospho-L-serine(out). With respect to regulation, inhibited by nitric oxide. Voltage-gated ion channel activity is inhibited by lanthanum(3+) and ruthenium red. Mitochondrial calcium transport is inhibited by lanthanum(3+), ruthenium red and Ru360. Non-selective voltage-gated ion channel that mediates the transport of anions and cations through the mitochondrion outer membrane and plasma membrane. The channel at the outer mitochondrial membrane allows diffusion of small hydrophilic molecules; in the plasma membrane it is involved in cell volume regulation and apoptosis. It adopts an open conformation at low or zero membrane potential and a closed conformation at potentials above 30-40 mV. The open state has a weak anion selectivity whereas the closed state is cation-selective. Binds various signaling molecules, including the sphingolipid ceramide, the phospholipid phosphatidylcholine, and the sterols cholesterol and oxysterol. In depolarized mitochondria, acts downstream of PRKN and PINK1 to promote mitophagy or prevent apoptosis; polyubiquitination by PRKN promotes mitophagy, while monoubiquitination by PRKN decreases mitochondrial calcium influx which ultimately inhibits apoptosis. May participate in the formation of the permeability transition pore complex (PTPC) responsible for the release of mitochondrial products that triggers apoptosis. May mediate ATP export from cells. Part of a complex composed of HSPA9, ITPR1 and VDAC1 that regulates mitochondrial calcium-dependent apoptosis by facilitating calcium transport from the ER lumen to the mitochondria intermembrane space thus providing calcium for the downstream calcium channel MCU that directly releases it into mitochondria matrix. In terms of biological role, catalyzes the scrambling of phospholipids across the outer mitochondrial membrane; the mechanism is unrelated to channel activity and is capable of translocating both anionic and zwitterionic phospholipids. This is Non-selective voltage-gated ion channel VDAC1 from Rattus norvegicus (Rat).